A 765-amino-acid polypeptide reads, in one-letter code: Periplasmic beta-glucosidase (765 aa).

An N-terminal signal peptide occupies residues 1–20; sequence MKWLCSVGVAVSLAMQPALA. Residue D287 is part of the active site.

This sequence belongs to the glycosyl hydrolase 3 family.

Its subcellular location is the periplasm. It catalyses the reaction Hydrolysis of terminal, non-reducing beta-D-glucosyl residues with release of beta-D-glucose.. The polypeptide is Periplasmic beta-glucosidase (bglX) (Salmonella typhimurium (strain LT2 / SGSC1412 / ATCC 700720)).